The following is a 336-amino-acid chain: Probable allantoicase (336 aa).

Belongs to the allantoicase family.

It carries out the reaction allantoate + H2O = (S)-ureidoglycolate + urea. Its pathway is nitrogen metabolism; (S)-allantoin degradation; (S)-ureidoglycolate from allantoate (aminidohydrolase route): step 1/1. This is Probable allantoicase from Acinetobacter baumannii (strain AYE).